The following is a 100-amino-acid chain: A-type ATP synthase subunit F (100 aa).

This sequence belongs to the V-ATPase F subunit family. As to quaternary structure, has multiple subunits with at least A(3), B(3), C, D, E, F, H, I and proteolipid K(x).

The protein localises to the cell membrane. Functionally, component of the A-type ATP synthase that produces ATP from ADP in the presence of a proton gradient across the membrane. In Methanocorpusculum labreanum (strain ATCC 43576 / DSM 4855 / Z), this protein is A-type ATP synthase subunit F.